The primary structure comprises 238 residues: Monocyte to macrophage differentiation factor (238 aa).

At 1-28 (MRFRNRFQRFMNHRAPANGRYKPTCYEH) the chain is on the cytoplasmic side. Residues 29–49 (AANCYTHAFLIVPAIVGSALL) traverse the membrane as a helical segment. Residues 50–61 (HRLSDDCWEKIT) are Lumenal-facing. Residues 62 to 82 (AWIYGMGLCALFIVSTVFHIV) form a helical membrane-spanning segment. Topologically, residues 83–101 (SWKKSHLRTVEHCFHMCDR) are cytoplasmic. Residues 102 to 122 (MVIYFFIAASYAPWLNLRELG) form a helical membrane-spanning segment. P123 is a topological domain (lumenal). Residues 124-144 (LASHMRWFIWLMAAGGTIYVF) form a helical membrane-spanning segment. Residues 145-151 (LYHEKYK) lie on the Cytoplasmic side of the membrane. Residues 152–172 (VVELFFYLTMGFSPALVVTSM) form a helical membrane-spanning segment. Residues 173 to 174 (NN) lie on the Lumenal side of the membrane. Residues 175 to 195 (TDGLQELACGGLIYCLGVVFF) form a helical membrane-spanning segment. Residues 196–198 (KSD) are Cytoplasmic-facing. A helical membrane pass occupies residues 199–219 (GIIPFAHAIWHLFVATAAAVH). The Lumenal segment spans residues 220–238 (YYAIWKYLYRSPTDFIRHL).

It belongs to the ADIPOR family.

The protein localises to the late endosome membrane. The protein resides in the lysosome membrane. Its function is as follows. Involved in the dynamics of lysosomal membranes associated with microglial activation following brain lesion. The polypeptide is Monocyte to macrophage differentiation factor (Mus musculus (Mouse)).